Consider the following 317-residue polypeptide: tRNA pseudouridine synthase B (317 aa).

Asp-47 functions as the Nucleophile in the catalytic mechanism.

The protein belongs to the pseudouridine synthase TruB family. Type 1 subfamily.

The enzyme catalyses uridine(55) in tRNA = pseudouridine(55) in tRNA. Its function is as follows. Responsible for synthesis of pseudouridine from uracil-55 in the psi GC loop of transfer RNAs. This is tRNA pseudouridine synthase B from Shewanella denitrificans (strain OS217 / ATCC BAA-1090 / DSM 15013).